A 328-amino-acid chain; its full sequence is dTDP-3,4-didehydro-2,6-dideoxy-alpha-D-glucose 3-reductase (328 aa).

Arg20 serves as a coordination point for substrate. Residues 38 to 39 (SR), Leu75, and His80 contribute to the NADP(+) site. Lys98 functions as the Proton donor in the catalytic mechanism. Arg166 and Asp178 together coordinate NADP(+). The substrate site is built by Tyr236 and Thr256.

The protein belongs to the Gfo/Idh/MocA family.

It carries out the reaction dTDP-4-dehydro-2,6-dideoxy-alpha-D-glucose + NADP(+) = dTDP-3,4-didehydro-2,6-dideoxy-alpha-D-glucose + NADPH + H(+). The protein operates within antibiotic biosynthesis. Functionally, involved in the biosynthesis of one of the two 2,6-deoxysugars, dTDP-L-oleandrose, attached to the macrolactone ring oleandolide to produce the aglycone antibiotic oleandomycin. Catalyzes the reduction of the C-3 keto moiety of dTDP-3,4-diketo-2,6-dideoxy-alpha-D-glucose to yield dTDP-4-keto-2,6-dideoxy-alpha-D-glucose. NADPH is the better reductant, however NADH can also be used. This Streptomyces antibioticus protein is dTDP-3,4-didehydro-2,6-dideoxy-alpha-D-glucose 3-reductase.